Reading from the N-terminus, the 131-residue chain is uncharacterized protein (131 aa).

This is an uncharacterized protein from Archaeoglobus fulgidus (strain ATCC 49558 / DSM 4304 / JCM 9628 / NBRC 100126 / VC-16).